Reading from the N-terminus, the 471-residue chain is Phosphatidate cytidylyltransferase 3 (471 aa).

A disordered region spans residues 1 to 72 (MAMEKDLSPN…HRRRSSENLA (72 aa)). Positions 21-35 (SYPTTPTSRMNTNNQ) are enriched in polar residues. Helical transmembrane passes span 97–116 (WIRT…IIYM), 120–139 (YIWA…LFFL), 149–169 (LPGF…FVYG), 196–216 (YQMV…ILTL), 228–250 (YAWT…ANIF), 255–277 (WFLL…GFYF), 293–313 (GFIG…NVLG), and 368–388 (FSLG…ASGF).

This sequence belongs to the CDS family. It depends on Mg(2+) as a cofactor.

The protein resides in the membrane. The catalysed reaction is a 1,2-diacyl-sn-glycero-3-phosphate + CTP + H(+) = a CDP-1,2-diacyl-sn-glycerol + diphosphate. It functions in the pathway phospholipid metabolism; CDP-diacylglycerol biosynthesis; CDP-diacylglycerol from sn-glycerol 3-phosphate: step 3/3. Its function is as follows. May be involved in the synthesis of minor phospholipids and in modulation of IP3-mediated signal transduction. The polypeptide is Phosphatidate cytidylyltransferase 3 (Arabidopsis thaliana (Mouse-ear cress)).